The primary structure comprises 297 residues: Phosphoribosylaminoimidazole-succinocarboxamide synthase (297 aa).

It belongs to the SAICAR synthetase family.

It carries out the reaction 5-amino-1-(5-phospho-D-ribosyl)imidazole-4-carboxylate + L-aspartate + ATP = (2S)-2-[5-amino-1-(5-phospho-beta-D-ribosyl)imidazole-4-carboxamido]succinate + ADP + phosphate + 2 H(+). It functions in the pathway purine metabolism; IMP biosynthesis via de novo pathway; 5-amino-1-(5-phospho-D-ribosyl)imidazole-4-carboxamide from 5-amino-1-(5-phospho-D-ribosyl)imidazole-4-carboxylate: step 1/2. This chain is Phosphoribosylaminoimidazole-succinocarboxamide synthase, found in Saccharopolyspora erythraea (strain ATCC 11635 / DSM 40517 / JCM 4748 / NBRC 13426 / NCIMB 8594 / NRRL 2338).